An 80-amino-acid polypeptide reads, in one-letter code: DNA-directed RNA polymerase RPB10 homolog (80 aa).

Residues Cys7, Cys10, Cys65, and Cys66 each contribute to the Zn(2+) site.

The protein belongs to the archaeal RpoN/eukaryotic RPB10 RNA polymerase subunit family. As to quaternary structure, part of the viral DNA-directed RNA polymerase that consists of 8 polII-like subunits (RPB1, RPB2, RPB3, RPB5, RPB6, RPB7, RPB9, RPB10), a capping enzyme and a termination factor.

Its subcellular location is the host cytoplasm. Component of the DNA-directed RNA polymerase (RNAP) that catalyzes the transcription in the cytoplasm of viral DNA into RNA using the four ribonucleoside triphosphates as substrates. The chain is DNA-directed RNA polymerase RPB10 homolog from African swine fever virus (isolate Pig/Kenya/KEN-50/1950) (ASFV).